A 229-amino-acid chain; its full sequence is MAKQPKRIQAWTGDREAAHAVAEAIALVKANAKAKFDESIEISVNLGVDPRHADQQVRGVVNLPSGTGRDVRVAVFAKDAKAAEATAAGAEHVGAEDLYEKIVGGFMDFDRVIATPDMMALVGRLGKVLGPRGLMPNPKVGTVTPNVGQAVKDAKGGAVEFRVEKAGIVHAGIGKVSFTDEALLINVKAMVDALVKAKPAGAKGIYVKRIGLSSTMGPGFKIDIASVNA.

It belongs to the universal ribosomal protein uL1 family. In terms of assembly, part of the 50S ribosomal subunit.

Its function is as follows. Binds directly to 23S rRNA. The L1 stalk is quite mobile in the ribosome, and is involved in E site tRNA release. In terms of biological role, protein L1 is also a translational repressor protein, it controls the translation of the L11 operon by binding to its mRNA. This chain is Large ribosomal subunit protein uL1, found in Caulobacter sp. (strain K31).